The sequence spans 272 residues: METYAVFGNPIAHSKSPFIHQQFAQQLNIEHPYGRVLAPINDFINTLNAFFRAGGKGANVTVPFKEEAFARADELTERAALAGAVNTLKRLEDGRLLGDNTDGVGLLSDLERLSFIRPGLRILLIGAGGASRGVLLPLLSLDCAVTITNRTVSRAEELAKLFAHTGSIQALGMDELEGHEFDLIINATSSGISGDIPAIPSSLIHPGIYCYDMFYQKGKTPFLAWCEQRGSKRNADGLGMLVAQAAHAFLLWHGVLPDVEPVIKLLQQELSA.

Shikimate contacts are provided by residues 14-16 and T61; that span reads SKS. The active-site Proton acceptor is K65. E77 lines the NADP(+) pocket. N86 and D102 together coordinate shikimate. NADP(+)-binding positions include 126–130, 149–154, and M213; these read GAGGA and NRTVSR. Y215 lines the shikimate pocket. An NADP(+)-binding site is contributed by G237.

The protein belongs to the shikimate dehydrogenase family. Homodimer.

The enzyme catalyses shikimate + NADP(+) = 3-dehydroshikimate + NADPH + H(+). It participates in metabolic intermediate biosynthesis; chorismate biosynthesis; chorismate from D-erythrose 4-phosphate and phosphoenolpyruvate: step 4/7. Involved in the biosynthesis of the chorismate, which leads to the biosynthesis of aromatic amino acids. Catalyzes the reversible NADPH linked reduction of 3-dehydroshikimate (DHSA) to yield shikimate (SA). The polypeptide is Shikimate dehydrogenase (NADP(+)) (Shigella sonnei (strain Ss046)).